Consider the following 54-residue polypeptide: MPKGNRSIISLECTVCKERNYTTTKNKRKSQDKLELSKFCPRCRKHQDHKEGKV.

Belongs to the bacterial ribosomal protein bL33 family.

This chain is Large ribosomal subunit protein bL33A, found in Myxococcus xanthus (strain DK1622).